We begin with the raw amino-acid sequence, 156 residues long: Putative type II restriction enzyme ApeKORF2002P (156 aa).

The protein to M.jannaschii MJ1199.

It carries out the reaction Endonucleolytic cleavage of DNA to give specific double-stranded fragments with terminal 5'-phosphates.. Functionally, a putative type II restriction enzyme, its methylase would be APE_2002. This chain is Putative type II restriction enzyme ApeKORF2002P, found in Aeropyrum pernix (strain ATCC 700893 / DSM 11879 / JCM 9820 / NBRC 100138 / K1).